The chain runs to 484 residues: Ribosomal RNA small subunit methyltransferase F (484 aa).

Residues 126 to 132, Glu150, Asp177, and Asp195 contribute to the S-adenosyl-L-methionine site; that span reads AAAPGSK. Cys248 serves as the catalytic Nucleophile.

This sequence belongs to the class I-like SAM-binding methyltransferase superfamily. RsmB/NOP family.

It localises to the cytoplasm. The enzyme catalyses cytidine(1407) in 16S rRNA + S-adenosyl-L-methionine = 5-methylcytidine(1407) in 16S rRNA + S-adenosyl-L-homocysteine + H(+). Functionally, specifically methylates the cytosine at position 1407 (m5C1407) of 16S rRNA. In Pectobacterium carotovorum subsp. carotovorum (strain PC1), this protein is Ribosomal RNA small subunit methyltransferase F.